The primary structure comprises 155 residues: Ciliary microtubule inner protein 2C (155 aa).

It belongs to the CIMIP2 family.

It is found in the cytoplasm. The protein localises to the cytoskeleton. Its subcellular location is the cilium axoneme. Microtubule inner protein (MIP) part of the dynein-decorated doublet microtubules (DMTs) in cilia axoneme, which is required for motile cilia beating. The polypeptide is Ciliary microtubule inner protein 2C (cimip2cb) (Xenopus laevis (African clawed frog)).